Reading from the N-terminus, the 1220-residue chain is Plasma membrane calcium-transporting ATPase 1 (1220 aa).

Position 2 is an N-acetylglycine (G2). At 2–105 (GDMANNSVAY…KTFLQLVWEA (104 aa)) the chain is on the cytoplasmic side. Phosphoserine occurs at positions 8 and 17. The chain crosses the membrane as a helical span at residues 106–126 (LQDVTLIILEIAAIVSLGLSF). At 127–154 (YQPPEGDNALCGEVSVGEEEGEGETGWI) the chain is on the extracellular side. Residues 155–175 (EGAAILLSVVCVVLVTAFNDW) traverse the membrane as a helical segment. Over 176-366 (SKEKQFRGLQ…KEKSVLQGKL (191 aa)) the chain is Cytoplasmic. The segment at 297-356 (EEEKKDEKKKEKKNKKQDGAIENRNKAKAQDGAAMEMQPLKSEEGGDGDEKDKKKANLPK) is disordered. Composition is skewed to basic and acidic residues over residues 312–325 (KQDG…KAKA) and 337–356 (KSEE…NLPK). The residue at position 338 (S338) is a Phosphoserine. Residues 367-386 (TKLAVQIGKAGLLMSAITVI) traverse the membrane as a helical segment. At 387–418 (ILVLYFVIDTFWVQKRPWLAECTPIYIQYFVK) the chain is on the extracellular side. A helical membrane pass occupies residues 419 to 439 (FFIIGVTVLVVAVPEGLPLAV). Residues 440–855 (TISLAYSVKK…RNVYDSISKF (416 aa)) lie on the Cytoplasmic side of the membrane. The active-site 4-aspartylphosphate intermediate is D475. Mg(2+) is bound by residues D475, T477, D797, and D801. Residues 856 to 876 (LQFQLTVNVVAVIVAFTGACI) traverse the membrane as a helical segment. At 877-882 (TQDSPL) the chain is on the extracellular side. Residues 883-903 (KAVQMLWVNLIMDTLASLALA) traverse the membrane as a helical segment. Over 904–927 (TEPPTESLLLRKPYGRNKPLISRT) the chain is Cytoplasmic. The helical transmembrane segment at 928 to 948 (MMKNILGHAFYQLVVVFTLLF) threads the bilayer. At 949 to 971 (AGEKFFDIDSGRNAPLHAPPSEH) the chain is on the extracellular side. A helical transmembrane segment spans residues 972-991 (YTIVFNTFVLMQLFNEINAR). Residues 992–1005 (KIHGERNVFEGIFN) are Cytoplasmic-facing. The chain crosses the membrane as a helical span at residues 1006–1027 (NAIFCTIVLGTFVVQIIIVQFG). Residues 1028 to 1039 (GKPFSCSELSIE) are Extracellular-facing. A helical membrane pass occupies residues 1040-1060 (QWLWSIFLGMGTLLWGQLIST). The Cytoplasmic portion of the chain corresponds to 1061-1220 (IPTSRLKFLK…SPLHSLETSL (160 aa)). Residues 1100-1117 (LRRGQILWFRGLNRIQTQ) are calmodulin-binding subdomain A. T1116 is subject to Phosphothreonine; by PKC. A calmodulin-binding subdomain B region spans residues 1118-1127 (IRVVNAFRSS). The interval 1118-1220 (IRVVNAFRSS…SPLHSLETSL (103 aa)) is required for basolateral membrane targeting. Residues S1140 and S1155 each carry the phosphoserine modification. The interval 1160–1220 (PLIDDTDAED…SPLHSLETSL (61 aa)) is disordered. T1165 is modified (phosphothreonine). 2 positions are modified to phosphoserine: S1178 and S1182. Residues 1200–1220 (MNKSATSSSPGSPLHSLETSL) show a composition bias toward polar residues.

Belongs to the cation transport ATPase (P-type) (TC 3.A.3) family. Type IIB subfamily. Monomer. Dimer. Oligomer. Calmodulin binding. Interacts with PDZD11. Interacts with SLC35G1 and STIM1. Interacts with YWHAE; interacts with the monomeric and dimeric forms of the YWHAE but prefer the monomer form; this interaction inhibits calcium-transporting ATPase activity. Interacts with NPTN; this interaction stabilizes ATP2B1 and increases ATPase activity; this interaction controls T cell calcium homeostasis following T cell activation. Interacts with EPB41; regulates small intestinal calcium absorption through regulation of membrane expression of ATP2B1.

The protein resides in the cell membrane. Its subcellular location is the basolateral cell membrane. It localises to the synapse. The protein localises to the presynaptic cell membrane. It is found in the cytoplasmic vesicle. The protein resides in the secretory vesicle. Its subcellular location is the synaptic vesicle membrane. It carries out the reaction Ca(2+)(in) + ATP + H2O = Ca(2+)(out) + ADP + phosphate + H(+). Catalyzes the hydrolysis of ATP coupled with the transport of calcium from the cytoplasm to the extracellular space thereby maintaining intracellular calcium homeostasis. Plays a role in blood pressure regulation through regulation of intracellular calcium concentration and nitric oxide production leading to regulation of vascular smooth muscle cells vasoconstriction. Positively regulates bone mineralization through absorption of calcium from the intestine. Plays dual roles in osteoclast differentiation and survival by regulating RANKL-induced calcium oscillations in preosteoclasts and mediating calcium extrusion in mature osteoclasts. Regulates insulin sensitivity through calcium/calmodulin signaling pathway by regulating AKT1 activation and NOS3 activation in endothelial cells. May play a role in synaptic transmission by modulating calcium and proton dynamics at the synaptic vesicles. The polypeptide is Plasma membrane calcium-transporting ATPase 1 (Sus scrofa (Pig)).